The primary structure comprises 551 residues: Glucose-6-phosphate isomerase (551 aa).

D-glucose 6-phosphate contacts are provided by residues 161-162, 212-217, glutamine 356, glutamate 360, histidine 391, and lysine 516; these read GS and SKTFTT. Glutamate 360 functions as the Proton donor in the catalytic mechanism. Active-site residues include histidine 391 and lysine 516.

The protein belongs to the GPI family. Homodimer.

It localises to the cytoplasm. It is found in the cytosol. The enzyme catalyses alpha-D-glucose 6-phosphate = beta-D-fructose 6-phosphate. The protein operates within carbohydrate degradation; glycolysis; D-glyceraldehyde 3-phosphate and glycerone phosphate from D-glucose: step 2/4. Its function is as follows. In the cytoplasm, catalyzes the conversion of glucose-6-phosphate to fructose-6-phosphate, the second step in glycolysis, and the reverse reaction during gluconeogenesis. In Agaricus bisporus (White button mushroom), this protein is Glucose-6-phosphate isomerase (gpi1).